We begin with the raw amino-acid sequence, 184 residues long: Gastrokine-2 (184 aa).

A signal peptide spans 1-20 (MKSLVAFLVVLSILRIQSQA). The 98-residue stretch at 54 to 151 (HSGSCSSTTI…LCKHIPLYEG (98 aa)) folds into the BRICHOS domain. Residues C81 and C143 are joined by a disulfide bond.

As to quaternary structure, heterodimer with TFF1; disulfide linked. Interacts with TFF2.

The protein localises to the secreted. The chain is Gastrokine-2 (Gkn2) from Rattus norvegicus (Rat).